Consider the following 49-residue polypeptide: Large ribosomal subunit protein bL33 (49 aa).

Belongs to the bacterial ribosomal protein bL33 family.

This Clostridium acetobutylicum (strain ATCC 824 / DSM 792 / JCM 1419 / IAM 19013 / LMG 5710 / NBRC 13948 / NRRL B-527 / VKM B-1787 / 2291 / W) protein is Large ribosomal subunit protein bL33.